The sequence spans 462 residues: CD-NTase-associated protein 4 (462 aa).

The tract at residues 1–226 (MSASLLEKQS…FENFICHALE (226 aa)) is N-terminal endonuclease domain. Catalysis depends on residues Asp50, Glu67, and Lys69. Asp50 provides a ligand contact to Mg(2+). The segment at 235-462 (DPIKINLSAS…QYIPTAELNL (228 aa)) is C-terminal SAVED domain. Residues 299–301 (KQR), Trp449, and Tyr454 each bind 2',3',3'-c-tri-AMP.

It belongs to the Cap4 nuclease family. In terms of assembly, a monomer in the absence of ligand, in its presence it forms oligomers. The cofactor is a divalent metal cation.

DNase activity is activated upon ligand binding. Inhibited by EDTA. In terms of biological role, effector DNase of a CBASS antivirus system. CBASS (cyclic oligonucleotide-based antiphage signaling system) provides immunity against bacteriophage. The CD-NTase protein synthesizes cyclic nucleotides in response to infection; these serve as specific second messenger signals. The signals activate a diverse range of effectors, leading to bacterial cell death and thus abortive phage infection. A type II-C(AAAA) CBASS system. Binds cyclic nucleotide second messengers (synthesized by CdnD, the cognate CD-NTase in the CBASS operon). Ligand binding activates it to endonucleolytically degrade dsDNA to approximately 6 bp length fragments, with a preference for 5'-C or 5'-G cleavage site. The minor product of CdnD is the activating nucleotide; also binds the major product (2',3',3'-cyclic AMP-AMP-AMP) but is not activated by it. Only binds DNA in the presence of ligand. Is not activated by c-di-AMP, c-di-GMP, 3'3'-cyclic GMP-AMP (3'3'-cGAMP) or 3',3',3'-cyclic AMP-AMP-GMP. The sequence is that of CD-NTase-associated protein 4 from Acinetobacter sp. (strain ATCC 27244 / 9458).